A 205-amino-acid polypeptide reads, in one-letter code: Protein-L-isoaspartate O-methyltransferase (205 aa).

The active site involves Ser56.

This sequence belongs to the methyltransferase superfamily. L-isoaspartyl/D-aspartyl protein methyltransferase family.

Its subcellular location is the cytoplasm. The enzyme catalyses [protein]-L-isoaspartate + S-adenosyl-L-methionine = [protein]-L-isoaspartate alpha-methyl ester + S-adenosyl-L-homocysteine. Catalyzes the methyl esterification of L-isoaspartyl residues in peptides and proteins that result from spontaneous decomposition of normal L-aspartyl and L-asparaginyl residues. It plays a role in the repair and/or degradation of damaged proteins. The sequence is that of Protein-L-isoaspartate O-methyltransferase from Pyrobaculum aerophilum (strain ATCC 51768 / DSM 7523 / JCM 9630 / CIP 104966 / NBRC 100827 / IM2).